We begin with the raw amino-acid sequence, 191 residues long: Cell division protein SepF (191 aa).

Polar residues predominate over residues 157–178 (YLNESPAQPVQTTTSFGRTATP). Residues 157–191 (YLNESPAQPVQTTTSFGRTATPTPAWGTDSRYAAQ) form a disordered region.

This sequence belongs to the SepF family. As to quaternary structure, homodimer. Interacts with FtsZ.

It is found in the cytoplasm. Cell division protein that is part of the divisome complex and is recruited early to the Z-ring. Probably stimulates Z-ring formation, perhaps through the cross-linking of FtsZ protofilaments. Its function overlaps with FtsA. This Synechococcus elongatus (strain ATCC 33912 / PCC 7942 / FACHB-805) (Anacystis nidulans R2) protein is Cell division protein SepF.